The sequence spans 341 residues: Aspartate carbamoyltransferase catalytic subunit (341 aa).

Arginine 89 and threonine 90 together coordinate carbamoyl phosphate. Lysine 117 provides a ligand contact to L-aspartate. Arginine 139, histidine 169, and glutamine 172 together coordinate carbamoyl phosphate. L-aspartate is bound by residues arginine 202 and arginine 257. Residues glycine 298 and proline 299 each coordinate carbamoyl phosphate.

This sequence belongs to the aspartate/ornithine carbamoyltransferase superfamily. ATCase family. Heterododecamer (2C3:3R2) of six catalytic PyrB chains organized as two trimers (C3), and six regulatory PyrI chains organized as three dimers (R2).

The catalysed reaction is carbamoyl phosphate + L-aspartate = N-carbamoyl-L-aspartate + phosphate + H(+). The protein operates within pyrimidine metabolism; UMP biosynthesis via de novo pathway; (S)-dihydroorotate from bicarbonate: step 2/3. In terms of biological role, catalyzes the condensation of carbamoyl phosphate and aspartate to form carbamoyl aspartate and inorganic phosphate, the committed step in the de novo pyrimidine nucleotide biosynthesis pathway. The chain is Aspartate carbamoyltransferase catalytic subunit from Paraburkholderia xenovorans (strain LB400).